The following is a 468-amino-acid chain: Uronate isomerase (468 aa).

This sequence belongs to the metallo-dependent hydrolases superfamily. Uronate isomerase family.

The catalysed reaction is D-glucuronate = D-fructuronate. It carries out the reaction aldehydo-D-galacturonate = keto-D-tagaturonate. The protein operates within carbohydrate metabolism; pentose and glucuronate interconversion. The chain is Uronate isomerase from Phocaeicola vulgatus (strain ATCC 8482 / DSM 1447 / JCM 5826 / CCUG 4940 / NBRC 14291 / NCTC 11154) (Bacteroides vulgatus).